The chain runs to 465 residues: Protein unc-93 homolog A (465 aa).

The next 5 membrane-spanning stretches (helical) occupy residues V8–L28, V40–I60, I71–A91, T96–S118, and I140–F160. N-linked (GlcNAc...) asparagine glycans are attached at residues N183 and N189. Residues T200 to L220 traverse the membrane as a helical segment. An N-linked (GlcNAc...) asparagine glycan is attached at N237. 5 helical membrane-spanning segments follow: residues L256–E276, Y281–S301, I319–W339, P343–W363, and I410–V427.

It belongs to the unc-93 family.

Its subcellular location is the membrane. This Danio rerio (Zebrafish) protein is Protein unc-93 homolog A (unc93a).